The following is a 370-amino-acid chain: Prolactin-releasing peptide receptor (370 aa).

A disordered region spans residues 1-34 (MTSLPPGTTGDPDLFSGPSPAGSTPANQSAEASE). Over 1 to 62 (MTSLPPGTTG…LQLVHQLKGL (62 aa)) the chain is Extracellular. Positions 21–34 (AGSTPANQSAEASE) are enriched in polar residues. N-linked (GlcNAc...) asparagine glycosylation is found at Asn27 and Asn36. The chain crosses the membrane as a helical span at residues 63–83 (IVMLYSIVVVVGLVGNCLLVL). Residues 84-101 (VIARVRRLHNVTNFLIGN) lie on the Cytoplasmic side of the membrane. Residues 102-122 (LALSDVLMCAACVPLTLAYAF) traverse the membrane as a helical segment. Residues 123–126 (EPRG) are Extracellular-facing. The chain crosses the membrane as a helical span at residues 127–147 (WVFGGGLCHLVFFLQPVTVYV). A disulfide bridge connects residues Cys134 and Cys211. Over 148-175 (SVFTLTTIAVDRYVVLVHPLRRRISLKL) the chain is Cytoplasmic. Residues 176-196 (SAYAVLGIWALSAVLALPAAV) form a helical membrane-spanning segment. The Extracellular portion of the chain corresponds to 197-223 (HTYHVELKPHDVRLCEEFWGSQERQRQ). The helical transmembrane segment at 224-244 (IYAWGLLLGTYLLPLLAILLS) threads the bilayer. Over 245–276 (YVRVSVKLRNRVVPGSVTQSQADWDRARRRRT) the chain is Cytoplasmic. The chain crosses the membrane as a helical span at residues 277–297 (FCLLVVVVVVFALCWLPLHIF). Topologically, residues 298 to 317 (NLLRDLDPRAIDPYAFGLVQ) are extracellular. A helical membrane pass occupies residues 318-338 (LLCHWLAMSSACYNPFIYAWL). Residues 339–370 (HDSFREELRKMLLSWPRKIVPHGQNMTVSVVI) lie on the Cytoplasmic side of the membrane. Residues 365-370 (TVSVVI) are required for interaction with GRIP1, GRIP2 and PICK1.

This sequence belongs to the G-protein coupled receptor 1 family. Interacts through its C-terminal region with the PDZ domain-containing proteins GRIP1, GRIP2 and PICK1. Interacts with PDZ domains 4 and 5 of GRIP1 and with the PDZ domain of PICK1. As to expression, widely expressed, with highest levels in pituitary, cerebellum, and hypothalamus.

It is found in the cell membrane. Receptor for prolactin-releasing peptide (PrRP). Implicated in lactation, regulation of food intake and pain-signal processing. This chain is Prolactin-releasing peptide receptor (Prlhr), found in Rattus norvegicus (Rat).